A 66-amino-acid polypeptide reads, in one-letter code: Toxin Cll1 (66 aa).

Residues 1-66 enclose the LCN-type CS-alpha/beta domain; it reads KEGYLVNKST…TYPLPNKSCS (66 aa). 4 disulfide bridges follow: C12–C65, C16–C41, C25–C46, and C29–C48.

This sequence belongs to the long (4 C-C) scorpion toxin superfamily. Sodium channel inhibitor family. Beta subfamily. As to expression, expressed by the venom gland.

Its subcellular location is the secreted. Functionally, beta toxin that binds site-4 of sodium channels (Nav) and reduces peak current (observed on Nav1.1/SCN1A, Nav1.2/SCN2A, Nav1.3/SCN3A, Nav1.4/SCN5A, Nav1.5/SCN4A, and Nav1.6/SCN8A (IC(50)=44.9 nM)), shifts the voltage of activation toward more negative potentials (observed on Nav1.6, Nav1.1 (weak), Nav1.2 (weak), and Nav1.7 (weak)), and induces resurgent currents at negative voltages following brief and strong depolarizations (observed on Nav1.6, Nav1.1 (weak), Nav1.2 (weak), and Nav1.4 (weak)). This toxin is only active on crustaceans. The protein is Toxin Cll1 of Centruroides limpidus (Mexican scorpion).